The primary structure comprises 534 residues: Cytochrome c oxidase subunit 1 (534 aa).

Residues 16–36 (VLYFMLAIFSGMAGTAMSLII) traverse the membrane as a helical segment. Residues E39, A42, and G44 each contribute to the Ca(2+) site. Helical transmembrane passes span 57–77 (VLVVGHAVLMIFFLVMPALIG), 101–121 (IAFWVLPMGLVCLVTSTLVES), 147–167 (AIFALHLTSISSLLGAINFIV), 182–202 (LPLFVWSIFITAFLLLLSLPV), 235–255 (LFYFFGHPEVYILIIPGFGII), and 267–287 (VFGEISMVYAMASIGLLGFLV). A Fe(II)-heme a-binding site is contributed by H62. Position 241 (H241) interacts with Cu cation. The 1'-histidyl-3'-tyrosine (His-Tyr) cross-link spans 241–245 (HPEVY). Y245 is a binding site for O2. The Cu cation site is built by H290 and H291. 2 helical membrane-spanning segments follow: residues 310-330 (MIIAIPTGIKIFSWLATIYGG) and 338-358 (MLYAIAFLFLFTMGGLTGVAL). Mg(2+) is bound by residues H368 and D369. The next 2 membrane-spanning stretches (helical) occupy residues 372 to 392 (YVVGHFHYVLSMGAIFSLFAG) and 414 to 434 (FWLIFIGANVIFFPMHFLGIN). H376 is a binding site for heme a3. A Fe(II)-heme a-binding site is contributed by H378. P441 contributes to the Ca(2+) binding site. The helical transmembrane segment at 452 to 472 (YVASIGSFIATLSLFLFIYIL) threads the bilayer.

The protein belongs to the heme-copper respiratory oxidase family. In terms of assembly, component of the cytochrome c oxidase (complex IV, CIV), a multisubunit enzyme composed of a catalytic core of 3 subunits and several supernumerary subunits. The complex exists as a monomer or a dimer and forms supercomplexes (SCs) in the inner mitochondrial membrane with ubiquinol-cytochrome c oxidoreductase (cytochrome b-c1 complex, complex III, CIII). Heme is required as a cofactor. It depends on Cu cation as a cofactor.

The protein localises to the mitochondrion inner membrane. The catalysed reaction is 4 Fe(II)-[cytochrome c] + O2 + 8 H(+)(in) = 4 Fe(III)-[cytochrome c] + 2 H2O + 4 H(+)(out). It participates in energy metabolism; oxidative phosphorylation. Its function is as follows. Component of the cytochrome c oxidase, the last enzyme in the mitochondrial electron transport chain which drives oxidative phosphorylation. The respiratory chain contains 3 multisubunit complexes succinate dehydrogenase (complex II, CII), ubiquinol-cytochrome c oxidoreductase (cytochrome b-c1 complex, complex III, CIII) and cytochrome c oxidase (complex IV, CIV), that cooperate to transfer electrons derived from NADH and succinate to molecular oxygen, creating an electrochemical gradient over the inner membrane that drives transmembrane transport and the ATP synthase. Cytochrome c oxidase is the component of the respiratory chain that catalyzes the reduction of oxygen to water. Electrons originating from reduced cytochrome c in the intermembrane space (IMS) are transferred via the dinuclear copper A center (CU(A)) of subunit 2 and heme A of subunit 1 to the active site in subunit 1, a binuclear center (BNC) formed by heme A3 and copper B (CU(B)). The BNC reduces molecular oxygen to 2 water molecules using 4 electrons from cytochrome c in the IMS and 4 protons from the mitochondrial matrix. This chain is Cytochrome c oxidase subunit 1 (COXI), found in Saccharomyces paradoxus (Yeast).